Here is a 100-residue protein sequence, read N- to C-terminus: NADH-quinone oxidoreductase subunit K (100 aa).

3 helical membrane-spanning segments follow: residues 2–22, 29–49, and 63–83; these read ITLT…LVGI, LMLF…LAAF, and FFII…LIIW.

It belongs to the complex I subunit 4L family. NDH-1 is composed of 14 different subunits. Subunits NuoA, H, J, K, L, M, N constitute the membrane sector of the complex.

It localises to the cell inner membrane. The catalysed reaction is a quinone + NADH + 5 H(+)(in) = a quinol + NAD(+) + 4 H(+)(out). Its function is as follows. NDH-1 shuttles electrons from NADH, via FMN and iron-sulfur (Fe-S) centers, to quinones in the respiratory chain. The immediate electron acceptor for the enzyme in this species is believed to be ubiquinone. Couples the redox reaction to proton translocation (for every two electrons transferred, four hydrogen ions are translocated across the cytoplasmic membrane), and thus conserves the redox energy in a proton gradient. This chain is NADH-quinone oxidoreductase subunit K, found in Nitratiruptor sp. (strain SB155-2).